Reading from the N-terminus, the 47-residue chain is Photosystem II reaction center protein K (47 aa).

Residues methionine 1–alanine 10 constitute a propeptide that is removed on maturation. Residues leucine 26–phenylalanine 46 form a helical membrane-spanning segment.

It belongs to the PsbK family. PSII is composed of 1 copy each of membrane proteins PsbA, PsbB, PsbC, PsbD, PsbE, PsbF, PsbH, PsbI, PsbJ, PsbK, PsbL, PsbM, PsbT, PsbX, PsbY, Psb30/Ycf12, peripheral proteins PsbO, CyanoQ (PsbQ), PsbU, PsbV and a large number of cofactors. It forms dimeric complexes.

The protein resides in the cellular thylakoid membrane. One of the components of the core complex of photosystem II (PSII). PSII is a light-driven water:plastoquinone oxidoreductase that uses light energy to abstract electrons from H(2)O, generating O(2) and a proton gradient subsequently used for ATP formation. It consists of a core antenna complex that captures photons, and an electron transfer chain that converts photonic excitation into a charge separation. This chain is Photosystem II reaction center protein K, found in Prochlorococcus marinus (strain NATL2A).